The primary structure comprises 297 residues: Acetaldehyde dehydrogenase (297 aa).

NAD(+) is bound at residue 15–18; it reads SGSI. C130 serves as the catalytic Acyl-thioester intermediate. NAD(+)-binding positions include 162 to 170 and N272; that span reads SAGIATREN.

This sequence belongs to the acetaldehyde dehydrogenase family.

The catalysed reaction is acetaldehyde + NAD(+) + CoA = acetyl-CoA + NADH + H(+). This Burkholderia pseudomallei (strain 1106a) protein is Acetaldehyde dehydrogenase.